We begin with the raw amino-acid sequence, 401 residues long: Imidazolonepropionase (401 aa).

Fe(3+) is bound by residues His-66 and His-68. Zn(2+) contacts are provided by His-66 and His-68. Positions 75, 138, and 171 each coordinate 4-imidazolone-5-propanoate. An N-formimidoyl-L-glutamate-binding site is contributed by Tyr-138. His-236 is a Fe(3+) binding site. Zn(2+) is bound at residue His-236. Gln-239 lines the 4-imidazolone-5-propanoate pocket. Asp-311 provides a ligand contact to Fe(3+). Zn(2+) is bound at residue Asp-311. N-formimidoyl-L-glutamate is bound by residues Asn-313 and Gly-315. Residue Thr-316 participates in 4-imidazolone-5-propanoate binding.

It belongs to the metallo-dependent hydrolases superfamily. HutI family. Zn(2+) serves as cofactor. Requires Fe(3+) as cofactor.

Its subcellular location is the cytoplasm. It catalyses the reaction 4-imidazolone-5-propanoate + H2O = N-formimidoyl-L-glutamate. It participates in amino-acid degradation; L-histidine degradation into L-glutamate; N-formimidoyl-L-glutamate from L-histidine: step 3/3. Catalyzes the hydrolytic cleavage of the carbon-nitrogen bond in imidazolone-5-propanoate to yield N-formimidoyl-L-glutamate. It is the third step in the universal histidine degradation pathway. This is Imidazolonepropionase from Acinetobacter baumannii (strain ACICU).